The following is a 96-amino-acid chain: Large ribosomal subunit protein uL23 (96 aa).

This sequence belongs to the universal ribosomal protein uL23 family. In terms of assembly, part of the 50S ribosomal subunit. Contacts protein L29, and trigger factor when it is bound to the ribosome.

One of the early assembly proteins it binds 23S rRNA. One of the proteins that surrounds the polypeptide exit tunnel on the outside of the ribosome. Forms the main docking site for trigger factor binding to the ribosome. In Bacillus cytotoxicus (strain DSM 22905 / CIP 110041 / 391-98 / NVH 391-98), this protein is Large ribosomal subunit protein uL23.